The sequence spans 334 residues: Aspartate carbamoyltransferase catalytic subunit (334 aa).

Carbamoyl phosphate contacts are provided by arginine 71 and threonine 72. Residue lysine 99 participates in L-aspartate binding. Arginine 121, histidine 151, and glutamine 154 together coordinate carbamoyl phosphate. L-aspartate-binding residues include arginine 184 and arginine 239. Carbamoyl phosphate-binding residues include glycine 280 and proline 281.

This sequence belongs to the aspartate/ornithine carbamoyltransferase superfamily. ATCase family. In terms of assembly, heterododecamer (2C3:3R2) of six catalytic PyrB chains organized as two trimers (C3), and six regulatory PyrI chains organized as three dimers (R2).

The catalysed reaction is carbamoyl phosphate + L-aspartate = N-carbamoyl-L-aspartate + phosphate + H(+). The protein operates within pyrimidine metabolism; UMP biosynthesis via de novo pathway; (S)-dihydroorotate from bicarbonate: step 2/3. Functionally, catalyzes the condensation of carbamoyl phosphate and aspartate to form carbamoyl aspartate and inorganic phosphate, the committed step in the de novo pyrimidine nucleotide biosynthesis pathway. The protein is Aspartate carbamoyltransferase catalytic subunit of Pseudomonas putida (Arthrobacter siderocapsulatus).